The primary structure comprises 313 residues: Uracil-DNA glycosylase (313 aa).

Over residues 1-12 the composition is skewed to polar residues; that stretch reads MIGQKTLYSFFS. Residues 1–25 form an interaction with FAM72A region; sequence MIGQKTLYSFFSPSPARKRHAPSPE. A mitochondrial localization signal region spans residues 1-29; sequence MIGQKTLYSFFSPSPARKRHAPSPEPAVQ. Positions 1 to 68 are disordered; the sequence is MIGQKTLYSF…GTPPSSPLSA (68 aa). S12 and S14 each carry phosphoserine. Positions 17–19 match the Important for nuclear sorting motif; sequence RKR. S23 is modified (phosphoserine). Over residues 43-53 the composition is skewed to low complexity; it reads AAAIPAKKAPA. T60 is subject to Phosphothreonine. S64 is subject to Phosphoserine. The tract at residues 73 to 88 is interaction with RPA2; sequence RIQRNKAAALLRLAAR. Q153 contacts uracil. D154 acts as the Proton acceptor in catalysis. H157 contacts dsDNA. Uracil is bound at residue F167. Residue S178 coordinates dsDNA. Uracil is bound at residue N213. DsDNA is bound by residues S256, H277, S279, S282, and R285. Position 277 (H277) interacts with uracil. At K295 the chain carries N6-acetyllysine.

This sequence belongs to the uracil-DNA glycosylase (UDG) superfamily. UNG family. As to quaternary structure, monomer. In terms of assembly, interacts with RPA2 subunit of the RPA trimer; this interaction mediates UNG2 recruitment to RPA-coated single-stranded DNA at stalled replication forks. Interacts with PCNA; this interaction mediates UNG2 recruitment to S-phase replication foci. Interacts (via N-terminus) with FAM72A. (Microbial infection) Interacts with HIV-1 Vpr. In terms of processing, processed by mitochondrial serine or cysteine peptidases to yield a mature dominant form that lacks N-terminal 29 amino acid residues and another minor form that lacks N-terminal 77 amino acid residues. The catalytic activity of UNG1 delta29 is not product-inhibited by AP sites.

The protein localises to the mitochondrion. The protein resides in the nucleus. It carries out the reaction Hydrolyzes single-stranded DNA or mismatched double-stranded DNA and polynucleotides, releasing free uracil.. It catalyses the reaction a 2'-deoxyuridine in single-stranded DNA + H2O = a 2'-deoxyribose 5'-monophosphate in single-stranded DNA + uracil. The catalysed reaction is a 2'-deoxyuridine in double-stranded DNA + H2O = a 2'-deoxyribose 5'-monophosphate in double-stranded DNA + uracil. Functionally, uracil-DNA glycosylase that hydrolyzes the N-glycosidic bond between uracil and deoxyribose in single- and double-stranded DNA (ssDNA and dsDNA) to release a free uracil residue and form an abasic (apurinic/apyrimidinic; AP) site. Excises uracil residues arising as a result of misincorporation of dUMP residues by DNA polymerase during replication or due to spontaneous or enzymatic deamination of cytosine. Mediates error-free base excision repair (BER) of uracil at replication forks. According to the model, it is recruited by PCNA to S-phase replication forks to remove misincorporated uracil at U:A base mispairs in nascent DNA strands. Via trimeric RPA it is recruited to ssDNA stretches ahead of the polymerase to allow detection and excision of deaminated cytosines prior to replication. The resultant AP sites temporarily stall replication, allowing time to repair the lesion. Mediates mutagenic uracil processing involved in antibody affinity maturation. Processes AICDA-induced U:G base mispairs at variable immunoglobulin (Ig) regions leading to the generation of transversion mutations. Operates at switch sites of Ig constant regions where it mediates Ig isotype class switch recombination. Excises AICDA-induced uracil residues forming AP sites that are subsequently nicked by APEX1 endonuclease. The accumulation of staggered nicks in opposite strands results in double strand DNA breaks that are finally resolved via non-homologous end joining repair pathway. This Homo sapiens (Human) protein is Uracil-DNA glycosylase.